The chain runs to 264 residues: Glyceraldehyde-3-phosphate dehydrogenase (264 aa).

Residues Arg45 and Thr93 each coordinate NAD(+). D-glyceraldehyde 3-phosphate-binding positions include 123–125 (SCT) and Thr154. Cys124 (nucleophile) is an active-site residue. Asn155 is an NAD(+) binding site. D-glyceraldehyde 3-phosphate is bound by residues Arg169, 182-183 (TG), and Arg205. The tract at residues 245–264 (GILGYTEDPXVSSDXKGNSH) is disordered.

This sequence belongs to the glyceraldehyde-3-phosphate dehydrogenase family. In terms of assembly, homotetramer.

The protein resides in the cytoplasm. The enzyme catalyses D-glyceraldehyde 3-phosphate + phosphate + NAD(+) = (2R)-3-phospho-glyceroyl phosphate + NADH + H(+). It participates in carbohydrate degradation; glycolysis; pyruvate from D-glyceraldehyde 3-phosphate: step 1/5. Its function is as follows. Catalyzes the oxidative phosphorylation of glyceraldehyde 3-phosphate (G3P) to 1,3-bisphosphoglycerate (BPG) using the cofactor NAD. The first reaction step involves the formation of a hemiacetal intermediate between G3P and a cysteine residue, and this hemiacetal intermediate is then oxidized to a thioester, with concomitant reduction of NAD to NADH. The reduced NADH is then exchanged with the second NAD, and the thioester is attacked by a nucleophilic inorganic phosphate to produce BPG. This chain is Glyceraldehyde-3-phosphate dehydrogenase (gap), found in Borrelia hermsii.